A 151-amino-acid polypeptide reads, in one-letter code: Putative pre-16S rRNA nuclease (151 aa).

This sequence belongs to the YqgF nuclease family.

It is found in the cytoplasm. Its function is as follows. Could be a nuclease involved in processing of the 5'-end of pre-16S rRNA. This Methylococcus capsulatus (strain ATCC 33009 / NCIMB 11132 / Bath) protein is Putative pre-16S rRNA nuclease.